The following is a 436-amino-acid chain: UPF0597 protein YhaM (436 aa).

It belongs to the UPF0597 family.

Its function is as follows. Thought to be a D-serine dehydratase, however it does not complement a dsdA (D-serine dehydratase) mutant in strain CFT073, suggesting it may not have that function. The sequence is that of UPF0597 protein YhaM from Escherichia coli O157:H7.